A 1285-amino-acid polypeptide reads, in one-letter code: Nuclear pore complex protein NUP133 (1285 aa).

Disordered regions lie at residues 1-53 (MFSP…PAPW) and 522-580 (EPPE…QTAR). The span at 31–41 (TPATQNRNNFI) shows a compositional bias: polar residues. 2 stretches are compositionally biased toward basic and acidic residues: residues 523-544 (PPER…DETR) and 553-569 (TAGR…DKGN).

It belongs to the nucleoporin Nup133 family. Part of the nuclear pore complex (NPC). The NPC has an eight-fold symmetrical structure comprising a central transport channel and two rings, the cytoplasmic and nuclear rings, to which eight filaments are attached. The cytoplasmic filaments have loose ends, while the nuclear filaments are joined in a distal ring, forming a nuclear basket. NPCs are highly dynamic in configuration and composition, and can be devided in 3 subcomplexes, the NUP62 subcomplex, the NUP107-160 subcomplex and the NUP93 subcomplex, containing approximately 30 different nucleoporin proteins.

It is found in the nucleus envelope. The protein resides in the nucleus. It localises to the nuclear pore complex. The chain is Nuclear pore complex protein NUP133 from Arabidopsis thaliana (Mouse-ear cress).